The primary structure comprises 544 residues: Chaperonin GroEL (544 aa).

ATP-binding positions include 29–32, K50, 86–90, G413, 479–481, and D495; these read TLGP, DGTTT, and DAA.

Belongs to the chaperonin (HSP60) family. As to quaternary structure, forms a cylinder of 14 subunits composed of two heptameric rings stacked back-to-back. Interacts with the co-chaperonin GroES.

It is found in the cytoplasm. It carries out the reaction ATP + H2O + a folded polypeptide = ADP + phosphate + an unfolded polypeptide.. In terms of biological role, together with its co-chaperonin GroES, plays an essential role in assisting protein folding. The GroEL-GroES system forms a nano-cage that allows encapsulation of the non-native substrate proteins and provides a physical environment optimized to promote and accelerate protein folding. This Borrelia turicatae (strain 91E135) protein is Chaperonin GroEL.